The following is a 249-amino-acid chain: 1-(5-phosphoribosyl)-5-[(5-phosphoribosylamino)methylideneamino] imidazole-4-carboxamide isomerase (249 aa).

Aspartate 8 (proton acceptor) is an active-site residue. The Proton donor role is filled by aspartate 129.

Belongs to the HisA/HisF family.

It localises to the cytoplasm. It catalyses the reaction 1-(5-phospho-beta-D-ribosyl)-5-[(5-phospho-beta-D-ribosylamino)methylideneamino]imidazole-4-carboxamide = 5-[(5-phospho-1-deoxy-D-ribulos-1-ylimino)methylamino]-1-(5-phospho-beta-D-ribosyl)imidazole-4-carboxamide. It functions in the pathway amino-acid biosynthesis; L-histidine biosynthesis; L-histidine from 5-phospho-alpha-D-ribose 1-diphosphate: step 4/9. The sequence is that of 1-(5-phosphoribosyl)-5-[(5-phosphoribosylamino)methylideneamino] imidazole-4-carboxamide isomerase from Magnetococcus marinus (strain ATCC BAA-1437 / JCM 17883 / MC-1).